A 255-amino-acid polypeptide reads, in one-letter code: Staphylococcal secretory antigen ssaA1 (255 aa).

Residues 1–26 (MKKIVTATIATAGLATIAFAGHDAQA) form the signal peptide. 3 consecutive repeat copies span residues 75 to 78 (YNNY), 88 to 91 (YNNY), and 98 to 101 (YNNY). The 3 X 4 AA repeats of Y-N-N-Y stretch occupies residues 75 to 101 (YNNYNTYSYNNASYNNYYNHSYQYNNY). The 122-residue stretch at 134–255 (AAPSSNGRSI…NQAGSYNFIH (122 aa)) folds into the Peptidase C51 domain.

It is found in the secreted. Its function is as follows. Not known; immunogenic protein. The polypeptide is Staphylococcal secretory antigen ssaA1 (ssaA1) (Staphylococcus aureus (strain MW2)).